The following is a 780-amino-acid chain: Catenin beta-1 (780 aa).

Residues 34 to 56 are disordered; the sequence is GIHSGATTTAPSLSGKGNPEDDD. ARM repeat units lie at residues 140–179, 224–263, 266–305, 350–389, 399–430, 431–472, 478–518, 520–561, 583–622, and 624–663; these read NYQDDAELATRAIPELTKLLNDEDQVVVNKAAVMVHQLSK, REGLLAIFKSGGIPALVKMLGSPVDSVLFYAITTLHNLLL, EGAKMAVRLAGGLQKMVALLNKTNVKFLAITTDCLQILAY, SSNKPAIVEAGGMQALGLHLTDPSQRLVQNCLWTLRNLSD, GLLGTLVQLLGSDDINVVTCAAGILSNLTCNN, YKNK…HLTS, EMAQ…NLAL, PANH…QFVE, IHNRIVIRGLNTIPLFVQLLYSPIENIQRVAAGVLCELAQ, and KEAAEAIEAEGATAPLTELLHSRNEGVATYAAAVLFRMSE. Positions 735-744 are enriched in basic and acidic residues; that stretch reads EHEMAGHHPG. Residues 735 to 770 form a disordered region; the sequence is EHEMAGHHPGPDYPVDGLPDLGHTQDLIDGLPPGDS.

It belongs to the beta-catenin family. As to quaternary structure, interacts with adnpa. Interacts with cdh1 during oogenesis and in the unfertilized egg. Interacts with ctnna1 and cdh2. In terms of processing, phosphorylation by gsk3b promotes ubiquitination and subsequent degradation by the proteasome. Post-translationally, ubiquitinated when phosphorylated by gsk3b, leading to its degradation. Expressed in the successional lamina, also expressed in both the epithelial and mesenchymal cells of the developing replacement tooth (at protein level). Expressed in the enamel organ as well as in the inner and outer dental epithelium during replacement tooth morphogenesis (at protein level). Expressed in the differentiated, polarized odontoblasts that line the dentine matrix as well as in the inner and outer dental epithelium during tooth cytodifferentiation (at protein level). Expressed in the reduced enamel organ, odontoblasts and weakly at the center of the dental papilla of the functional tooth as well as in the epithelial crypts surrounding the functional tooth (at protein level). Expressed in the liver (at protein level). Expressed at intercalated disks in the heart (at protein level). Expressed in the ovary.

It localises to the cytoplasm. The protein resides in the nucleus. The protein localises to the cell membrane. Its subcellular location is the cell junction. It is found in the adherens junction. Key downstream component of the canonical Wnt signaling pathway. In the absence of Wnt, forms a complex with axin1, axin2, apc, csnk1a1 and gsk3b that promotes phosphorylation on N-terminal Ser and Thr residues and ubiquitination of ctnnb1 and its subsequent degradation by the proteasome. In the presence of Wnt ligand, ctnnb1 is not ubiquitinated and accumulates in the nucleus, where it acts as a coactivator for transcription factors of the TCF/LEF family, leading to activate Wnt responsive genes. Plays a key role in dorsoventral patterning: in prospective ventral blastomeres, its down-regulation by axin1 and axin2 leads to inhibit the Wnt signaling pathway, while in prospective dorsal blastomeres, degradation of axin results in stabilization and nuclear translocation of ctnnb1. The protein is Catenin beta-1 of Danio rerio (Zebrafish).